The following is a 124-amino-acid chain: Large ribosomal subunit protein mL51 (124 aa).

A mitochondrion-targeting transit peptide spans 1 to 31; that stretch reads MSVFGGLWRSAVNLCQSSRLFSTGSCARIRM.

The protein belongs to the mitochondrion-specific ribosomal protein mL51 family. In terms of assembly, component of the mitochondrial ribosome large subunit (39S) which comprises a 16S rRNA and about 50 distinct proteins.

It localises to the mitochondrion. In Danio rerio (Zebrafish), this protein is Large ribosomal subunit protein mL51 (mrpl51).